We begin with the raw amino-acid sequence, 242 residues long: Uridylate kinase (242 aa).

12-15 (KLSG) contributes to the ATP binding site. The segment at 20-25 (GDEGFG) is involved in allosteric activation by GTP. G54 contacts UMP. G55 and R59 together coordinate ATP. Residues D74 and 135 to 142 (TGSPFFTT) contribute to the UMP site. ATP is bound by residues T162, Y168, and D171.

Belongs to the UMP kinase family. In terms of assembly, homohexamer.

Its subcellular location is the cytoplasm. It catalyses the reaction UMP + ATP = UDP + ADP. Its pathway is pyrimidine metabolism; CTP biosynthesis via de novo pathway; UDP from UMP (UMPK route): step 1/1. With respect to regulation, allosterically activated by GTP. Inhibited by UTP. In terms of biological role, catalyzes the reversible phosphorylation of UMP to UDP. The polypeptide is Uridylate kinase (Pasteurella multocida (strain Pm70)).